We begin with the raw amino-acid sequence, 233 residues long: Probable chemoreceptor glutamine deamidase CheD (233 aa).

Belongs to the CheD family.

The enzyme catalyses L-glutaminyl-[protein] + H2O = L-glutamyl-[protein] + NH4(+). Probably deamidates glutamine residues to glutamate on methyl-accepting chemotaxis receptors (MCPs), playing an important role in chemotaxis. This is Probable chemoreceptor glutamine deamidase CheD from Ralstonia nicotianae (strain ATCC BAA-1114 / GMI1000) (Ralstonia solanacearum).